Consider the following 126-residue polypeptide: C-type natriuretic peptide 2 (126 aa).

The N-terminal stretch at Met1–Thr22 is a signal peptide. Residues Arg23 to Lys102 constitute a propeptide that is removed on maturation. A disordered region spans residues Ser44 to Gly80. Cys110 and Cys126 are disulfide-bonded.

The protein belongs to the natriuretic peptide family. Brain and spinal cord.

It is found in the secreted. Exhibits natriuretic and vasodepressant activity. Has cGMP-stimulating activity. May help to regulate body fluid homeostasis in a variety of aquatic environments. This Oryzias latipes (Japanese rice fish) protein is C-type natriuretic peptide 2.